A 101-amino-acid chain; its full sequence is NAD(P)H-quinone oxidoreductase subunit 4L, chloroplastic (101 aa).

The next 3 membrane-spanning stretches (helical) occupy residues 2 to 22 (MFEH…YGLI), 32 to 52 (MCLE…SDLF), and 61 to 81 (IFSI…LAIV).

This sequence belongs to the complex I subunit 4L family. NDH is composed of at least 16 different subunits, 5 of which are encoded in the nucleus.

It localises to the plastid. The protein localises to the chloroplast thylakoid membrane. The enzyme catalyses a plastoquinone + NADH + (n+1) H(+)(in) = a plastoquinol + NAD(+) + n H(+)(out). The catalysed reaction is a plastoquinone + NADPH + (n+1) H(+)(in) = a plastoquinol + NADP(+) + n H(+)(out). In terms of biological role, NDH shuttles electrons from NAD(P)H:plastoquinone, via FMN and iron-sulfur (Fe-S) centers, to quinones in the photosynthetic chain and possibly in a chloroplast respiratory chain. The immediate electron acceptor for the enzyme in this species is believed to be plastoquinone. Couples the redox reaction to proton translocation, and thus conserves the redox energy in a proton gradient. This chain is NAD(P)H-quinone oxidoreductase subunit 4L, chloroplastic, found in Lemna minor (Common duckweed).